Here is a 376-residue protein sequence, read N- to C-terminus: Histidinol-phosphate aminotransferase (376 aa).

N6-(pyridoxal phosphate)lysine is present on K230.

The protein belongs to the class-II pyridoxal-phosphate-dependent aminotransferase family. Histidinol-phosphate aminotransferase subfamily. Homodimer. It depends on pyridoxal 5'-phosphate as a cofactor.

It carries out the reaction L-histidinol phosphate + 2-oxoglutarate = 3-(imidazol-4-yl)-2-oxopropyl phosphate + L-glutamate. Its pathway is amino-acid biosynthesis; L-histidine biosynthesis; L-histidine from 5-phospho-alpha-D-ribose 1-diphosphate: step 7/9. This is Histidinol-phosphate aminotransferase from Trichodesmium erythraeum (strain IMS101).